The sequence spans 368 residues: Glutaminyl-peptide cyclotransferase (368 aa).

An N-terminal signal peptide occupies residues 1-23 (MAGERRDSKAAAFFCLAWALCLA). Residue Asn53 is glycosylated (N-linked (GlcNAc...) asparagine). A disulfide bridge links Cys143 with Cys169. Asp164 provides a ligand contact to Zn(2+). The active-site Proton acceptor is the Glu207. Glu208 contributes to the Zn(2+) binding site. Asp254 (proton acceptor) is an active-site residue. A glycan (N-linked (GlcNAc...) asparagine) is linked at Asn292. His336 provides a ligand contact to Zn(2+). Asn352 carries N-linked (GlcNAc...) asparagine glycosylation.

It belongs to the glutaminyl-peptide cyclotransferase family. In terms of tissue distribution, expressed by the venom gland.

Its subcellular location is the secreted. It catalyses the reaction N-terminal L-glutaminyl-[peptide] = N-terminal 5-oxo-L-prolyl-[peptide] + NH4(+). In terms of biological role, responsible for the biosynthesis of pyroglutamyl peptides. Has a bias against acidic and tryptophan residues adjacent to the N-terminal glutaminyl residue and a lack of importance of chain length after the second residue. Also catalyzes N-terminal pyroglutamate formation. The protein is Glutaminyl-peptide cyclotransferase (QPCT) of Boiga dendrophila (Mangrove snake).